The following is a 179-amino-acid chain: ATP synthase subunit delta (179 aa).

It belongs to the ATPase delta chain family. As to quaternary structure, F-type ATPases have 2 components, F(1) - the catalytic core - and F(0) - the membrane proton channel. F(1) has five subunits: alpha(3), beta(3), gamma(1), delta(1), epsilon(1). F(0) has three main subunits: a(1), b(2) and c(10-14). The alpha and beta chains form an alternating ring which encloses part of the gamma chain. F(1) is attached to F(0) by a central stalk formed by the gamma and epsilon chains, while a peripheral stalk is formed by the delta and b chains.

The protein resides in the cell inner membrane. In terms of biological role, f(1)F(0) ATP synthase produces ATP from ADP in the presence of a proton or sodium gradient. F-type ATPases consist of two structural domains, F(1) containing the extramembraneous catalytic core and F(0) containing the membrane proton channel, linked together by a central stalk and a peripheral stalk. During catalysis, ATP synthesis in the catalytic domain of F(1) is coupled via a rotary mechanism of the central stalk subunits to proton translocation. Functionally, this protein is part of the stalk that links CF(0) to CF(1). It either transmits conformational changes from CF(0) to CF(1) or is implicated in proton conduction. This is ATP synthase subunit delta from Koribacter versatilis (strain Ellin345).